The sequence spans 334 residues: N-acetyl-gamma-glutamyl-phosphate reductase (334 aa).

Residue cysteine 154 is part of the active site.

This sequence belongs to the NAGSA dehydrogenase family. Type 1 subfamily.

The protein localises to the cytoplasm. It catalyses the reaction N-acetyl-L-glutamate 5-semialdehyde + phosphate + NADP(+) = N-acetyl-L-glutamyl 5-phosphate + NADPH + H(+). The protein operates within amino-acid biosynthesis; L-arginine biosynthesis; N(2)-acetyl-L-ornithine from L-glutamate: step 3/4. Functionally, catalyzes the NADPH-dependent reduction of N-acetyl-5-glutamyl phosphate to yield N-acetyl-L-glutamate 5-semialdehyde. This is N-acetyl-gamma-glutamyl-phosphate reductase from Buchnera aphidicola subsp. Acyrthosiphon pisum (strain Tuc7).